Consider the following 611-residue polypeptide: Chaperone protein DnaK (611 aa).

Thr173 carries the post-translational modification Phosphothreonine; by autocatalysis. 2 disordered regions span residues 525–548 (DNISEEDKSNAESKKDALKSALEG) and 573–611 (YQQAQQAQQQAQDGAQQTQNDSNVEDAEFKEVNDDEDKK). The segment covering 529-542 (EEDKSNAESKKDAL) has biased composition (basic and acidic residues). The span at 574–591 (QQAQQAQQQAQDGAQQTQ) shows a compositional bias: low complexity. Residues 599-611 (AEFKEVNDDEDKK) show a composition bias toward basic and acidic residues.

Belongs to the heat shock protein 70 family.

Acts as a chaperone. The protein is Chaperone protein DnaK of Staphylococcus haemolyticus (strain JCSC1435).